Reading from the N-terminus, the 433-residue chain is Trigger factor (433 aa).

In terms of domain architecture, PPIase FKBP-type spans 161 to 246 (EDRATIDFTG…LKKVEERELP (86 aa)).

It belongs to the FKBP-type PPIase family. Tig subfamily.

It is found in the cytoplasm. It catalyses the reaction [protein]-peptidylproline (omega=180) = [protein]-peptidylproline (omega=0). Involved in protein export. Acts as a chaperone by maintaining the newly synthesized protein in an open conformation. Functions as a peptidyl-prolyl cis-trans isomerase. The polypeptide is Trigger factor (Edwardsiella ictaluri (strain 93-146)).